The sequence spans 377 residues: Anhydro-N-acetylmuramic acid kinase (377 aa).

G12–D19 is an ATP binding site.

Belongs to the anhydro-N-acetylmuramic acid kinase family.

The catalysed reaction is 1,6-anhydro-N-acetyl-beta-muramate + ATP + H2O = N-acetyl-D-muramate 6-phosphate + ADP + H(+). It functions in the pathway amino-sugar metabolism; 1,6-anhydro-N-acetylmuramate degradation. The protein operates within cell wall biogenesis; peptidoglycan recycling. Its function is as follows. Catalyzes the specific phosphorylation of 1,6-anhydro-N-acetylmuramic acid (anhMurNAc) with the simultaneous cleavage of the 1,6-anhydro ring, generating MurNAc-6-P. Is required for the utilization of anhMurNAc either imported from the medium or derived from its own cell wall murein, and thus plays a role in cell wall recycling. The polypeptide is Anhydro-N-acetylmuramic acid kinase (Methylorubrum extorquens (strain CM4 / NCIMB 13688) (Methylobacterium extorquens)).